The following is a 78-amino-acid chain: Large ribosomal subunit protein bL28 (78 aa).

It belongs to the bacterial ribosomal protein bL28 family.

The chain is Large ribosomal subunit protein bL28 from Pectobacterium carotovorum subsp. carotovorum (strain PC1).